Here is a 374-residue protein sequence, read N- to C-terminus: Gustatory receptor 23a (374 aa).

Topologically, residues 1 to 6 (MFPPTR) are cytoplasmic. The chain crosses the membrane as a helical span at residues 7–27 (VQASSRVVLKIFHFILVAFSL). Residues 28–36 (RSRRLSRLV) lie on the Extracellular side of the membrane. Residues 37–57 (LWLQFLGWLTWFISMWTQSVI) traverse the membrane as a helical segment. Over 58 to 72 (YAQTIDCTLDCSLRH) the chain is Cytoplasmic. A helical membrane pass occupies residues 73–93 (ILTFFQTVSHAFIVVTSFLDG). Residues 94–112 (FRIKQDQLDEPIAFEDSDP) are Extracellular-facing. A helical membrane pass occupies residues 113 to 133 (WLAFTVLAMLVPTLGVEYLVC). Residues 134–226 (SNAPEYAFRI…YNDLHYLFVR (93 aa)) lie on the Cytoplasmic side of the membrane. Residues 227 to 247 (INGYFGGSLLTIIIVHFAIFV) form a helical membrane-spanning segment. Over 248 to 263 (SNSYWLFVDIRTRPWR) the chain is Extracellular. Residues 264–284 (IYAILLNLGFIFNVALQMAAA) traverse the membrane as a helical segment. Over 285-343 (CWHCQQSYNLGRQIGCLISKLVKPQGSKLYNDLVSEFSLQTLHQRFVVTAKDFFSLNLH) the chain is Cytoplasmic. A helical membrane pass occupies residues 344–364 (LLSSMFAAVVTYLVILIQFMF). Over 365 to 374 (AERSSTRGSG) the chain is Extracellular.

It belongs to the insect chemoreceptor superfamily. Gustatory receptor (GR) family. Gr2a subfamily. As to expression, expressed in the adult labellar chemosensory neurons and labral sense organ. Expressed in neurons of the dorsal pharyngeal sense organ of larvae.

The protein localises to the cell membrane. Functionally, probable gustatory receptor which mediates acceptance or avoidance behavior, depending on its substrates. This Drosophila melanogaster (Fruit fly) protein is Gustatory receptor 23a (Gr23a).